We begin with the raw amino-acid sequence, 199 residues long: Putative pseudouridine methyltransferase (199 aa).

S-adenosyl-L-methionine contacts are provided by L132 and C186.

It belongs to the methyltransferase superfamily. TrmY family.

It localises to the cytoplasm. The sequence is that of Putative pseudouridine methyltransferase from Vibrio parahaemolyticus serotype O3:K6 (strain RIMD 2210633).